We begin with the raw amino-acid sequence, 160 residues long: Ribosome maturation factor RimP (160 aa).

The protein belongs to the RimP family.

Its subcellular location is the cytoplasm. In terms of biological role, required for maturation of 30S ribosomal subunits. This chain is Ribosome maturation factor RimP, found in Symbiobacterium thermophilum (strain DSM 24528 / JCM 14929 / IAM 14863 / T).